A 76-amino-acid chain; its full sequence is Sea anemone sodium channel inhibitor type I (76 aa).

The N-terminal stretch at 1-19 is a signal peptide; that stretch reads MNRMLIIFVVVTVFGLASG. The propeptide occupies 20 to 30; that stretch reads LGPNMPAPDLA. 3 disulfide bridges follow: C37–C72, C39–C60, and C53–C73.

This sequence belongs to the sea anemone sodium channel inhibitory toxin family. Type I subfamily. Expressed in acontia, a specialised envenomation structure laden with batteries of venom-containing nematocysts found only in the superfamily Metridioidea.

It localises to the secreted. It is found in the nematocyst. In terms of biological role, may affect sodium channels (Nav). The sequence is that of Sea anemone sodium channel inhibitor type I from Calliactis polypus (Hermit crab anemone).